Here is a 2341-residue protein sequence, read N- to C-terminus: Pecanex-like protein 1 (2341 aa).

A run of 2 helical transmembrane segments spans residues 28–50 (ATFV…FTLY) and 57–74 (MIIV…FIVL). The segment at 98–163 (FTDQRTKAEQ…SNQIGSGSSR (66 aa)) is disordered. Asn-109 carries an N-linked (GlcNAc...) asparagine glycan. The span at 143-163 (SSRNSYAGLDPSNQIGSGSSR) shows a compositional bias: polar residues. An N-linked (GlcNAc...) asparagine glycan is attached at Asn-215. Disordered stretches follow at residues 270–294 (HSHS…VAFP), 311–331 (DPVS…SLVE), and 344–689 (DLKI…TRAR). Residues 272–282 (HSYRKDHRPRG) show a composition bias toward basic residues. 2 stretches are compositionally biased toward polar residues: residues 320–331 (KPLSGSKESLVE) and 347–356 (INTSQPPTKS). Residue Asn-348 is glycosylated (N-linked (GlcNAc...) asparagine). Positions 370-388 (SLRSLSTRSSGSTESYCSG) are enriched in low complexity. An N-linked (GlcNAc...) asparagine glycan is attached at Asn-394. Residues 394 to 404 (NSTVSSYKSEQ) show a composition bias toward polar residues. Composition is skewed to basic and acidic residues over residues 430–455 (KKEC…EKIA), 465–478 (HEAK…EMHN), and 527–544 (SKVR…DVRP). Over residues 554-569 (ASAHKSGRRRTGKKRA) the composition is skewed to basic residues. Residues 605–635 (QSDLSRASSVQSAHQFSSDSSSSTTSHSCQS) are compositionally biased toward low complexity. A glycan (N-linked (GlcNAc...) asparagine) is linked at Asn-702. Residues 756-834 (QVAFPEGEEQ…STAQVKVQSR (79 aa)) are disordered. Over residues 814–832 (LSLQDGQQGQQSTAQVKVQ) the composition is skewed to low complexity. 2 N-linked (GlcNAc...) asparagine glycosylation sites follow: Asn-852 and Asn-863. The next 3 helical transmembrane spans lie at 1003–1025 (ILEN…ILLI), 1032–1049 (IWVF…YSLL), and 1067–1089 (IAYS…DYGS). Asn-1091 is a glycosylation site (N-linked (GlcNAc...) asparagine). Residues 1110–1132 (FISARDLVIVFTLCFPIVFFIGL) traverse the membrane as a helical segment. Asn-1155 is a glycosylation site (N-linked (GlcNAc...) asparagine). 4 helical membrane passes run 1160 to 1182 (LLAA…GLCY), 1194 to 1213 (IPVL…YHLS), 1266 to 1288 (LVVC…FTVL), and 1295 to 1312 (VLYT…YVLP). N-linked (GlcNAc...) asparagine glycans are attached at residues Asn-1579, Asn-1720, Asn-1982, Asn-2062, and Asn-2072. 2 disordered regions span residues 2062-2120 (NATT…SPAR) and 2217-2237 (GQSS…NNSH). Polar residues-rich tracts occupy residues 2069–2078 (PHSNVTQGSI), 2096–2114 (YPPT…SGLV), and 2217–2236 (GQSS…ANNS). 2 N-linked (GlcNAc...) asparagine glycosylation sites follow: Asn-2234 and Asn-2260.

Belongs to the pecanex family.

It localises to the membrane. This Homo sapiens (Human) protein is Pecanex-like protein 1.